The primary structure comprises 162 residues: Phosphopantetheine adenylyltransferase (162 aa).

T9 serves as a coordination point for substrate. Residues 9–10 (TF) and H17 contribute to the ATP site. K41, L77, and R91 together coordinate substrate. Residues 92–94 (GLR), E102, and 127–133 (RQAIASK) each bind ATP.

This sequence belongs to the bacterial CoaD family. Homohexamer. It depends on Mg(2+) as a cofactor.

Its subcellular location is the cytoplasm. The enzyme catalyses (R)-4'-phosphopantetheine + ATP + H(+) = 3'-dephospho-CoA + diphosphate. The protein operates within cofactor biosynthesis; coenzyme A biosynthesis; CoA from (R)-pantothenate: step 4/5. In terms of biological role, reversibly transfers an adenylyl group from ATP to 4'-phosphopantetheine, yielding dephospho-CoA (dPCoA) and pyrophosphate. The polypeptide is Phosphopantetheine adenylyltransferase (Cereibacter sphaeroides (strain ATCC 17029 / ATH 2.4.9) (Rhodobacter sphaeroides)).